A 97-amino-acid chain; its full sequence is Putative pterin-4-alpha-carbinolamine dehydratase (97 aa).

This sequence belongs to the pterin-4-alpha-carbinolamine dehydratase family.

The enzyme catalyses (4aS,6R)-4a-hydroxy-L-erythro-5,6,7,8-tetrahydrobiopterin = (6R)-L-erythro-6,7-dihydrobiopterin + H2O. This chain is Putative pterin-4-alpha-carbinolamine dehydratase, found in Ruegeria pomeroyi (strain ATCC 700808 / DSM 15171 / DSS-3) (Silicibacter pomeroyi).